The primary structure comprises 311 residues: tRNA dimethylallyltransferase 2 (311 aa).

15 to 22 (GPTAVGKT) contributes to the ATP binding site. 17 to 22 (TAVGKT) provides a ligand contact to substrate. The interaction with substrate tRNA stretch occupies residues 40–43 (DSMQ).

Belongs to the IPP transferase family. As to quaternary structure, monomer. Mg(2+) serves as cofactor.

It catalyses the reaction adenosine(37) in tRNA + dimethylallyl diphosphate = N(6)-dimethylallyladenosine(37) in tRNA + diphosphate. In terms of biological role, catalyzes the transfer of a dimethylallyl group onto the adenine at position 37 in tRNAs that read codons beginning with uridine, leading to the formation of N6-(dimethylallyl)adenosine (i(6)A). The sequence is that of tRNA dimethylallyltransferase 2 from Syntrophus aciditrophicus (strain SB).